The chain runs to 256 residues: Ubiquinone/menaquinone biosynthesis C-methyltransferase UbiE (256 aa).

Residues Met-1–Pro-12 are compositionally biased toward basic and acidic residues. A disordered region spans residues Met-1–Pro-22. S-adenosyl-L-methionine is bound by residues Thr-79, Asp-100, and Asp-128–Ala-129.

Belongs to the class I-like SAM-binding methyltransferase superfamily. MenG/UbiE family.

It catalyses the reaction a 2-demethylmenaquinol + S-adenosyl-L-methionine = a menaquinol + S-adenosyl-L-homocysteine + H(+). The enzyme catalyses a 2-methoxy-6-(all-trans-polyprenyl)benzene-1,4-diol + S-adenosyl-L-methionine = a 5-methoxy-2-methyl-3-(all-trans-polyprenyl)benzene-1,4-diol + S-adenosyl-L-homocysteine + H(+). Its pathway is quinol/quinone metabolism; menaquinone biosynthesis; menaquinol from 1,4-dihydroxy-2-naphthoate: step 2/2. It participates in cofactor biosynthesis; ubiquinone biosynthesis. Functionally, methyltransferase required for the conversion of demethylmenaquinol (DMKH2) to menaquinol (MKH2) and the conversion of 2-polyprenyl-6-methoxy-1,4-benzoquinol (DDMQH2) to 2-polyprenyl-3-methyl-6-methoxy-1,4-benzoquinol (DMQH2). The polypeptide is Ubiquinone/menaquinone biosynthesis C-methyltransferase UbiE (Pseudomonas putida (Arthrobacter siderocapsulatus)).